We begin with the raw amino-acid sequence, 477 residues long: Probable glycine dehydrogenase (decarboxylating) subunit 2 (477 aa).

Residue lysine 264 is modified to N6-(pyridoxal phosphate)lysine.

The protein belongs to the GcvP family. C-terminal subunit subfamily. The glycine cleavage system is composed of four proteins: P, T, L and H. In this organism, the P 'protein' is a heterodimer of two subunits. The cofactor is pyridoxal 5'-phosphate.

It catalyses the reaction N(6)-[(R)-lipoyl]-L-lysyl-[glycine-cleavage complex H protein] + glycine + H(+) = N(6)-[(R)-S(8)-aminomethyldihydrolipoyl]-L-lysyl-[glycine-cleavage complex H protein] + CO2. Functionally, the glycine cleavage system catalyzes the degradation of glycine. The P protein binds the alpha-amino group of glycine through its pyridoxal phosphate cofactor; CO(2) is released and the remaining methylamine moiety is then transferred to the lipoamide cofactor of the H protein. The chain is Probable glycine dehydrogenase (decarboxylating) subunit 2 from Fervidobacterium nodosum (strain ATCC 35602 / DSM 5306 / Rt17-B1).